The sequence spans 238 residues: Survival of motor neuron-related-splicing factor 30 (238 aa).

In terms of domain architecture, Tudor spans 72–132; it reads SWKVGDKCMA…KPVEEGRKAK (61 aa). The short motif at 142–160 is the Nuclear localization signal element; that stretch reads KKEMIAQQREYKKKKALKK. Serine 201 carries the post-translational modification Phosphoserine. Lysine 219 bears the N6-acetyllysine mark.

The protein belongs to the SMN family. As to quaternary structure, associates with spliceosomes. Associates with U4/U5/U6 tri-snRNP and with U2 snRNP.

The protein localises to the nucleus speckle. It localises to the nucleus. The protein resides in the cajal body. Functionally, involved in spliceosome assembly. The sequence is that of Survival of motor neuron-related-splicing factor 30 (Smndc1) from Mus musculus (Mouse).